The sequence spans 230 residues: uncharacterized protein (230 aa).

This sequence belongs to the transferase hexapeptide repeat family.

This is an uncharacterized protein from Escherichia coli (strain K12).